Consider the following 360-residue polypeptide: MKASLLNKLDTLQDRFEELTALLGDAEVISDQTRFRAYSREYAEVEPVIACYVGWRKVQDDLEGAQALLKDADPDLREMAVEEVREAKEQLVGLESQLQRMLLPKDPNDGRNVFLEIRAGTGGDEAAIFSGDLFRMYSRYAEKRGWRLEILSENEGEHGGYKEIIARVEGDSVYGKLKFESGAHRVQRVPETESQGRIHTSACTVAVLPEPDEQVAIEINPADLRVDTYRASGAGGQHVNKTDSAIRITHLPTGIVVECQEERSQHKNRARAMSWLSAKLNDMQTSAAQNAIASERKLLVGSGDRSERIRTYNYPQGRVTDHRINLTLYSLDDILAGGVDAVIEPLLAEYQADQLAALGD.

Gln237 bears the N5-methylglutamine mark.

Belongs to the prokaryotic/mitochondrial release factor family. Methylated by PrmC. Methylation increases the termination efficiency of RF1.

Its subcellular location is the cytoplasm. Its function is as follows. Peptide chain release factor 1 directs the termination of translation in response to the peptide chain termination codons UAG and UAA. The polypeptide is Peptide chain release factor 1 (Pseudomonas entomophila (strain L48)).